Here is a 281-residue protein sequence, read N- to C-terminus: tRNA pseudouridine synthase A (281 aa).

Residue Asp55 is the Nucleophile of the active site. Tyr110 contributes to the substrate binding site.

The protein belongs to the tRNA pseudouridine synthase TruA family.

It carries out the reaction uridine(38/39/40) in tRNA = pseudouridine(38/39/40) in tRNA. Its function is as follows. Formation of pseudouridine at positions 38, 39 and 40 in the anticodon stem and loop of transfer RNAs. This chain is tRNA pseudouridine synthase A, found in Methanocorpusculum labreanum (strain ATCC 43576 / DSM 4855 / Z).